The chain runs to 331 residues: Probable cytosolic iron-sulfur protein assembly protein Ciao1 (331 aa).

WD repeat units lie at residues 12–51 (GHKG…WTTK), 57–96 (GHKR…ATLE), 97–136 (GHEN…EFEC), 142–181 (AHSQ…SDWD), 188–227 (SHTS…NEAG), 246–285 (LHTR…KRDA), and 297–331 (AHEQ…KLQE).

The protein belongs to the WD repeat CIA1 family.

Essential component of the cytosolic iron-sulfur (Fe/S) protein assembly machinery. Required for the maturation of extramitochondrial Fe/S proteins. This is Probable cytosolic iron-sulfur protein assembly protein Ciao1 from Drosophila mojavensis (Fruit fly).